An 84-amino-acid polypeptide reads, in one-letter code: Sulfur carrier protein TusA (84 aa).

Residue Cys-19 is the Cysteine persulfide intermediate of the active site.

Belongs to the sulfur carrier protein TusA family. As to quaternary structure, interacts with IscS.

The protein localises to the cytoplasm. Its pathway is tRNA modification. In terms of biological role, sulfur carrier protein involved in sulfur trafficking in the cell. Part of a sulfur-relay system required for 2-thiolation during synthesis of 2-thiouridine of the modified wobble base 5-methylaminomethyl-2-thiouridine (mnm(5)s(2)U) in tRNA. Interacts with IscS and stimulates its cysteine desulfurase activity. Accepts an activated sulfur from IscS, which is then transferred to TusD, and thus determines the direction of sulfur flow from IscS to 2-thiouridine formation. Also appears to be involved in sulfur transfer for the biosynthesis of molybdopterin. In Photorhabdus laumondii subsp. laumondii (strain DSM 15139 / CIP 105565 / TT01) (Photorhabdus luminescens subsp. laumondii), this protein is Sulfur carrier protein TusA.